The primary structure comprises 206 residues: Transcription antitermination protein NusB (206 aa).

Residues 135-206 are disordered; that stretch reads ARGEKTSAQE…ETQPPGVNEV (72 aa). Residues 169–180 are compositionally biased toward low complexity; sequence ATPATTPVTTTV.

The protein belongs to the NusB family.

Functionally, involved in transcription antitermination. Required for transcription of ribosomal RNA (rRNA) genes. Binds specifically to the boxA antiterminator sequence of the ribosomal RNA (rrn) operons. This Heliobacterium modesticaldum (strain ATCC 51547 / Ice1) protein is Transcription antitermination protein NusB.